The following is a 210-amino-acid chain: Uracil phosphoribosyltransferase (210 aa).

5-phospho-alpha-D-ribose 1-diphosphate is bound by residues arginine 78, arginine 103, and 130 to 138 (DPMLATGGT). Uracil is bound by residues isoleucine 193 and 198–200 (GDA). A 5-phospho-alpha-D-ribose 1-diphosphate-binding site is contributed by aspartate 199.

The protein belongs to the UPRTase family. Mg(2+) is required as a cofactor.

The catalysed reaction is UMP + diphosphate = 5-phospho-alpha-D-ribose 1-diphosphate + uracil. It participates in pyrimidine metabolism; UMP biosynthesis via salvage pathway; UMP from uracil: step 1/1. With respect to regulation, allosterically activated by GTP. In terms of biological role, catalyzes the conversion of uracil and 5-phospho-alpha-D-ribose 1-diphosphate (PRPP) to UMP and diphosphate. The protein is Uracil phosphoribosyltransferase of Xanthomonas axonopodis pv. citri (strain 306).